A 306-amino-acid chain; its full sequence is Curved DNA-binding protein (306 aa).

A J domain is found at 5 to 69 (DYYAIMGVKP…QRRAEYDQMW (65 aa)).

It is found in the cytoplasm. It localises to the nucleoid. In terms of biological role, DNA-binding protein that preferentially recognizes a curved DNA sequence. It is probably a functional analog of DnaJ; displays overlapping activities with DnaJ, but functions under different conditions, probably acting as a molecular chaperone in an adaptive response to environmental stresses other than heat shock. Lacks autonomous chaperone activity; binds native substrates and targets them for recognition by DnaK. Its activity is inhibited by the binding of CbpM. The chain is Curved DNA-binding protein from Escherichia coli (strain K12 / MC4100 / BW2952).